Reading from the N-terminus, the 918-residue chain is Sarcosine dehydrogenase, mitochondrial (918 aa).

The segment covering 1–13 (MASLSRALRVAAA) has biased composition (low complexity). A mitochondrion-targeting transit peptide spans 1 to 22 (MASLSRALRVAAAHPRQSPTRG). Residues 1–40 (MASLSRALRVAAAHPRQSPTRGMGPCNLSSAAGPTAEKSV) form a disordered region. Lys-38 is modified (N6-succinyllysine). His-108 is modified (tele-8alpha-FAD histidine). Position 173 is an N6-acetyllysine; alternate (Lys-173). Lys-173 is subject to N6-succinyllysine; alternate. N6-succinyllysine is present on residues Lys-377 and Lys-391. N6-acetyllysine is present on residues Lys-559 and Lys-775. Tyr-777 carries the post-translational modification Phosphotyrosine. An N6-acetyllysine; alternate mark is found at Lys-802, Lys-884, and Lys-904. An N6-succinyllysine; alternate mark is found at Lys-802, Lys-884, and Lys-904.

It belongs to the GcvT family. FAD serves as cofactor. In terms of tissue distribution, expressed in pancreas, liver and kidney.

The protein localises to the mitochondrion matrix. The catalysed reaction is (6S)-5,6,7,8-tetrahydrofolyl-(gamma-L-Glu)(n) + sarcosine + oxidized [electron-transfer flavoprotein] + H(+) = (6R)-5,10-methylenetetrahydrofolyl-(gamma-L-Glu)(n) + reduced [electron-transfer flavoprotein] + glycine. The protein operates within amine and polyamine degradation; sarcosine degradation; formaldehyde and glycine from sarcosine: step 1/1. Its function is as follows. Catalyzes the last step of the oxidative degradation of choline to glycine. Converts sarcosine into glycine. The sequence is that of Sarcosine dehydrogenase, mitochondrial from Homo sapiens (Human).